Here is a 118-residue protein sequence, read N- to C-terminus: UPF0449 protein C19orf25 homolog (118 aa).

Tyr-63 is modified (phosphotyrosine). Positions 69 to 105 form a coiled coil; sequence YVAMNQRLQQAGAQLEQKRADLQQAGEELERDISQVG.

The protein belongs to the UPF0449 family.

The sequence is that of UPF0449 protein C19orf25 homolog from Bos taurus (Bovine).